The chain runs to 577 residues: Arginine--tRNA ligase (577 aa).

Positions 122–132 (PNVAKEMHVGH) match the 'HIGH' region motif.

It belongs to the class-I aminoacyl-tRNA synthetase family. In terms of assembly, monomer.

It is found in the cytoplasm. The catalysed reaction is tRNA(Arg) + L-arginine + ATP = L-arginyl-tRNA(Arg) + AMP + diphosphate. This is Arginine--tRNA ligase (argS) from Salmonella typhimurium (strain SL1344).